The following is a 403-amino-acid chain: MSKFNRIHLVVLDSVGIGAAPDADKFFNAGVADTDSDTLGHISETAGLSVPNMAKIGLGNISRPIPLKTIPTEDNPTGYVTKLEEVSLGKDTMTGHWEIMGLNITEPFDTFWNGFPEEILTKIEEFSGRKIIREANKPYSGTAVIDDFGPRQMETGELIVYTSADPVLQIAAHEDIIPVEELYKICEYARSITLERPALLGRIIARPYVGEPGNFTRTANRHDYAVSPFQDTVLNKLADAGVPTYAVGKINDIFNGSGITNDMGHNKSNSHGIDTLIKTLQLPEFTKGFSFTNLVDFDANFGHRRDPEGYRDCLHEFDNRLPEIFANMKEDDLLLITADHGNDPTYAGTDHTREYIPLLAYSASFTGNGLIPQGHFADISATVAENFGVDTAMIGESFLGHLK.

Mn(2+) contacts are provided by Asp13, Asp298, His303, Asp339, His340, and His351.

Belongs to the phosphopentomutase family. Mn(2+) serves as cofactor.

It localises to the cytoplasm. The enzyme catalyses 2-deoxy-alpha-D-ribose 1-phosphate = 2-deoxy-D-ribose 5-phosphate. It catalyses the reaction alpha-D-ribose 1-phosphate = D-ribose 5-phosphate. Its pathway is carbohydrate degradation; 2-deoxy-D-ribose 1-phosphate degradation; D-glyceraldehyde 3-phosphate and acetaldehyde from 2-deoxy-alpha-D-ribose 1-phosphate: step 1/2. Isomerase that catalyzes the conversion of deoxy-ribose 1-phosphate (dRib-1-P) and ribose 1-phosphate (Rib-1-P) to deoxy-ribose 5-phosphate (dRib-5-P) and ribose 5-phosphate (Rib-5-P), respectively. This chain is Phosphopentomutase, found in Streptococcus pyogenes serotype M12 (strain MGAS2096).